The following is a 131-amino-acid chain: DNA-directed RNA polymerase subunit omega (131 aa).

Belongs to the RNA polymerase subunit omega family. As to quaternary structure, the RNAP catalytic core consists of 2 alpha, 1 beta, 1 beta' and 1 omega subunit. When a sigma factor is associated with the core the holoenzyme is formed, which can initiate transcription.

The enzyme catalyses RNA(n) + a ribonucleoside 5'-triphosphate = RNA(n+1) + diphosphate. Its function is as follows. Promotes RNA polymerase assembly. Latches the N- and C-terminal regions of the beta' subunit thereby facilitating its interaction with the beta and alpha subunits. The polypeptide is DNA-directed RNA polymerase subunit omega (Chelativorans sp. (strain BNC1)).